A 416-amino-acid chain; its full sequence is Calreticulin (416 aa).

The signal sequence occupies residues 1-25 (MENRGRNPSFLSLLLLLSLFAIASA). N-linked (GlcNAc...) asparagine glycosylation is present at Asn-57. A disulfide bond links Cys-111 and Cys-143. 4 residues coordinate an alpha-D-glucoside: Tyr-115, Lys-117, Tyr-134, and Asp-141. An N-linked (GlcNAc...) asparagine glycan is attached at Asn-157. Tandem repeats lie at residues 197-208 (KQTGSLYTDWDL), 216-227 (DPEAKKPEDWDD), 233-244 (DPEDKKPEGYDD), 251-262 (DPEAKKPEDWDD), 266-276 (GEWTAPTIPNP), 280-290 (GPWKAKKIKNP), and 294-304 (GKWKAPMIDNP). The tract at residues 197–262 (KQTGSLYTDW…EAKKPEDWDD (66 aa)) is 4 X approximate repeats. Basic and acidic residues predominate over residues 217 to 241 (PEAKKPEDWDDKEFIPDPEDKKPEG). Residues 217 to 281 (PEAKKPEDWD…TIPNPEYKGP (65 aa)) form a disordered region. Residues 266–304 (GEWTAPTIPNPEYKGPWKAKKIKNPNYKGKWKAPMIDNP) are 3 X approximate repeats. An an alpha-D-glucoside-binding site is contributed by Glu-324. The span at 351–381 (EETWGKQKDAEKAAFEELEKKREEEETKDDP) shows a compositional bias: basic and acidic residues. Positions 351–416 (EETWGKQKDA…DKDDDQHDEL (66 aa)) are disordered. Acidic residues predominate over residues 382-400 (VESDAEDEDEAEADDSDKD). Residues 401–416 (DADKSDDKDDDQHDEL) show a composition bias toward basic and acidic residues. The Prevents secretion from ER motif lies at 413–416 (HDEL).

It belongs to the calreticulin family.

The protein resides in the endoplasmic reticulum lumen. Functionally, molecular calcium-binding chaperone promoting folding, oligomeric assembly and quality control in the ER via the calreticulin/calnexin cycle. This lectin may interact transiently with almost all of the monoglucosylated glycoproteins that are synthesized in the ER. This is Calreticulin from Beta vulgaris (Sugar beet).